We begin with the raw amino-acid sequence, 630 residues long: Very-long-chain aldehyde decarbonylase GL1-7 (630 aa).

The next 4 membrane-spanning stretches (helical) occupy residues leucine 93–isoleucine 113, glycine 126–histidine 146, phenylalanine 185–alanine 205, and valine 325–tyrosine 345. The region spanning leucine 133–threonine 272 is the Fatty acid hydroxylase domain.

Belongs to the sterol desaturase family. In terms of assembly, homodimer. As to expression, expressed in panicles at low levels.

It is found in the endoplasmic reticulum membrane. The catalysed reaction is a long-chain fatty aldehyde + 2 NADPH + O2 + H(+) = a long-chain alkane + formate + 2 NADP(+) + H2O. Its function is as follows. Aldehyde decarbonylase involved in the conversion of aldehydes to alkanes. Core component of a very-long-chain alkane synthesis complex. This Oryza sativa subsp. japonica (Rice) protein is Very-long-chain aldehyde decarbonylase GL1-7.